The sequence spans 185 residues: Crossover junction endodeoxyribonuclease RuvC (185 aa).

Catalysis depends on residues D7, E68, and D141. Mg(2+)-binding residues include D7, E68, and D141.

This sequence belongs to the RuvC family. Homodimer which binds Holliday junction (HJ) DNA. The HJ becomes 2-fold symmetrical on binding to RuvC with unstacked arms; it has a different conformation from HJ DNA in complex with RuvA. In the full resolvosome a probable DNA-RuvA(4)-RuvB(12)-RuvC(2) complex forms which resolves the HJ. Mg(2+) serves as cofactor.

It localises to the cytoplasm. The enzyme catalyses Endonucleolytic cleavage at a junction such as a reciprocal single-stranded crossover between two homologous DNA duplexes (Holliday junction).. Functionally, the RuvA-RuvB-RuvC complex processes Holliday junction (HJ) DNA during genetic recombination and DNA repair. Endonuclease that resolves HJ intermediates. Cleaves cruciform DNA by making single-stranded nicks across the HJ at symmetrical positions within the homologous arms, yielding a 5'-phosphate and a 3'-hydroxyl group; requires a central core of homology in the junction. The consensus cleavage sequence is 5'-(A/T)TT(C/G)-3'. Cleavage occurs on the 3'-side of the TT dinucleotide at the point of strand exchange. HJ branch migration catalyzed by RuvA-RuvB allows RuvC to scan DNA until it finds its consensus sequence, where it cleaves and resolves the cruciform DNA. This is Crossover junction endodeoxyribonuclease RuvC from Mycolicibacterium smegmatis (strain ATCC 700084 / mc(2)155) (Mycobacterium smegmatis).